A 36-amino-acid chain; its full sequence is Photosystem II reaction center protein X (36 aa).

A helical membrane pass occupies residues 9–29 (LWSIFWGGVVVALGAAALTAI).

The protein belongs to the PsbX family. Type 1 subfamily. As to quaternary structure, PSII is composed of 1 copy each of membrane proteins PsbA, PsbB, PsbC, PsbD, PsbE, PsbF, PsbH, PsbI, PsbJ, PsbK, PsbL, PsbM, PsbT, PsbX, Psb30/Ycf12, peripheral proteins PsbO, CyanoQ (PsbQ), PsbU, PsbV and a large number of cofactors. It forms dimeric complexes.

The protein resides in the cell inner membrane. Its function is as follows. Involved in the binding and/or turnover of quinones at the Q(B) site of photosystem II (PSII). PSII is a light-driven water plastoquinone oxidoreductase, using light energy to abstract electrons from H(2)O, generating a proton gradient subsequently used for ATP formation. This is Photosystem II reaction center protein X from Gloeobacter violaceus (strain ATCC 29082 / PCC 7421).